The following is a 426-amino-acid chain: 3-phosphoshikimate 1-carboxyvinyltransferase (426 aa).

3-phosphoshikimate-binding residues include Lys-21, Ser-22, and Arg-26. Residue Lys-21 participates in phosphoenolpyruvate binding. Phosphoenolpyruvate-binding residues include Gly-93 and Arg-121. Ser-165, Gln-167, Asp-313, and Lys-340 together coordinate 3-phosphoshikimate. Gln-167 serves as a coordination point for phosphoenolpyruvate. The active-site Proton acceptor is Asp-313. 2 residues coordinate phosphoenolpyruvate: Arg-344 and Arg-386.

This sequence belongs to the EPSP synthase family. As to quaternary structure, monomer.

It localises to the cytoplasm. The catalysed reaction is 3-phosphoshikimate + phosphoenolpyruvate = 5-O-(1-carboxyvinyl)-3-phosphoshikimate + phosphate. It functions in the pathway metabolic intermediate biosynthesis; chorismate biosynthesis; chorismate from D-erythrose 4-phosphate and phosphoenolpyruvate: step 6/7. Functionally, catalyzes the transfer of the enolpyruvyl moiety of phosphoenolpyruvate (PEP) to the 5-hydroxyl of shikimate-3-phosphate (S3P) to produce enolpyruvyl shikimate-3-phosphate and inorganic phosphate. In Solibacter usitatus (strain Ellin6076), this protein is 3-phosphoshikimate 1-carboxyvinyltransferase.